Here is a 144-residue protein sequence, read N- to C-terminus: NADH-ubiquinone oxidoreductase chain 6 (144 aa).

5 helical membrane-spanning segments follow: residues 1–21, 25–45, 46–66, 75–95, and 108–128; these read MIKLFFVLAIFSSIISYMNID, SSFFLIFSLLFSMPIISMSMH, IWFSYFICLLFLSGIFVILVY, VVKSYMSLFLLLISIIYFSPV, and FYYSIYWFIFSFILICLLFFM.

Belongs to the complex I subunit 6 family.

It localises to the mitochondrion membrane. The enzyme catalyses a ubiquinone + NADH + 5 H(+)(in) = a ubiquinol + NAD(+) + 4 H(+)(out). Core subunit of the mitochondrial membrane respiratory chain NADH dehydrogenase (Complex I) that is believed to belong to the minimal assembly required for catalysis. Complex I functions in the transfer of electrons from NADH to the respiratory chain. The immediate electron acceptor for the enzyme is believed to be ubiquinone. This chain is NADH-ubiquinone oxidoreductase chain 6 (nd6), found in Caenorhabditis briggsae.